The primary structure comprises 324 residues: 4-hydroxy-3-methylbut-2-enyl diphosphate reductase (324 aa).

Cys28 lines the [4Fe-4S] cluster pocket. The (2E)-4-hydroxy-3-methylbut-2-enyl diphosphate site is built by His57 and His90. The dimethylallyl diphosphate site is built by His57 and His90. Isopentenyl diphosphate-binding residues include His57 and His90. Cys112 serves as a coordination point for [4Fe-4S] cluster. Residue His140 coordinates (2E)-4-hydroxy-3-methylbut-2-enyl diphosphate. His140 is a dimethylallyl diphosphate binding site. His140 is a binding site for isopentenyl diphosphate. The Proton donor role is filled by Glu142. Residue Thr180 participates in (2E)-4-hydroxy-3-methylbut-2-enyl diphosphate binding. A [4Fe-4S] cluster-binding site is contributed by Cys210. Positions 238, 239, 240, and 282 each coordinate (2E)-4-hydroxy-3-methylbut-2-enyl diphosphate. Dimethylallyl diphosphate-binding residues include Ser238, Ser239, Asn240, and Ser282. Isopentenyl diphosphate-binding residues include Ser238, Ser239, Asn240, and Ser282.

It belongs to the IspH family. [4Fe-4S] cluster serves as cofactor.

The enzyme catalyses isopentenyl diphosphate + 2 oxidized [2Fe-2S]-[ferredoxin] + H2O = (2E)-4-hydroxy-3-methylbut-2-enyl diphosphate + 2 reduced [2Fe-2S]-[ferredoxin] + 2 H(+). It carries out the reaction dimethylallyl diphosphate + 2 oxidized [2Fe-2S]-[ferredoxin] + H2O = (2E)-4-hydroxy-3-methylbut-2-enyl diphosphate + 2 reduced [2Fe-2S]-[ferredoxin] + 2 H(+). Its pathway is isoprenoid biosynthesis; dimethylallyl diphosphate biosynthesis; dimethylallyl diphosphate from (2E)-4-hydroxy-3-methylbutenyl diphosphate: step 1/1. It functions in the pathway isoprenoid biosynthesis; isopentenyl diphosphate biosynthesis via DXP pathway; isopentenyl diphosphate from 1-deoxy-D-xylulose 5-phosphate: step 6/6. Catalyzes the conversion of 1-hydroxy-2-methyl-2-(E)-butenyl 4-diphosphate (HMBPP) into a mixture of isopentenyl diphosphate (IPP) and dimethylallyl diphosphate (DMAPP). Acts in the terminal step of the DOXP/MEP pathway for isoprenoid precursor biosynthesis. The protein is 4-hydroxy-3-methylbut-2-enyl diphosphate reductase of Ralstonia nicotianae (strain ATCC BAA-1114 / GMI1000) (Ralstonia solanacearum).